Reading from the N-terminus, the 222-residue chain is SIN3-HDAC complex-associated factor (222 aa).

Basic and acidic residues predominate over residues 111–121; that stretch reads LQKEFKRHNSD. 2 disordered regions span residues 111 to 154 and 199 to 222; these read LQKE…AGSS and KKSATEKPEQEGPQSPAISTQEEW. Positions 124 to 135 are enriched in low complexity; the sequence is STTSSASPAQSP. Polar residues-rich tracts occupy residues 136 to 154 and 210 to 222; these read CYSNQSDEGSDTEMSAGSS and GPQSPAISTQEEW.

This sequence belongs to the SINHCAF family. Component of the Sin3/HDAC corepressor complex at least composed of BRMS1, BRMS1L, ING2, SAP30, SAP30L, HDAC1. Found in a complex composed of at least SINHCAF, SIN3A, HDAC1, SAP30, RBBP4, OGT and TET1.

The protein resides in the nucleus. Subunit of the Sin3 deacetylase complex (Sin3/HDAC), this subunit is important for the repression of genes encoding components of the TGF-beta signaling pathway. Core component of a SIN3A complex (composed of at least SINHCAF, SIN3A, HDAC1, SAP30, RBBP4, OGT and TET1) present in embryonic stem (ES) cells and is essential to maintain the complex on chromatin. This Gallus gallus (Chicken) protein is SIN3-HDAC complex-associated factor (SINHCAF).